The sequence spans 1331 residues: Disease resistance protein RUN1 (1331 aa).

The disordered stretch occupies residues 1–20 (MASTSSSRASSSSSSSSTPS). The TIR domain maps to 25–190 (ITYDVFLSFR…EITDSIFRRL (166 aa)). NAD(+) is bound by residues 34-39 (RGEDTR) and Gly-66. The active site involves Glu-100. The NB-ARC domain occupies 206-434 (SHVKEMIWRL…REPEAEILSV (229 aa)). LRR repeat units lie at residues 429–452 (AEIL…IFLD), 480–509 (IKNL…GWEI), 540–565 (IKRV…AFAK), 616–638 (SYEL…NFDG), 648–673 (CSNI…SYSR), 684–708 (MPNL…VGNM), 709–732 (KKLT…IGDL), 734–756 (SLEI…GGNM), 757–779 (KSLT…IGDL), 781–803 (SLKY…GGNM), 804–826 (KSLR…IRDL), 828–850 (SLER…GGNM), 851–873 (KSLM…IGDL), 875–897 (SLKY…GGNM), 898–920 (KSLT…IGDL), 922–944 (SLVS…GGNM), 945–967 (KSLN…IGDL), 969–991 (SLMR…VGNM), 992–1014 (KSLE…IGDL), and 1017–1040 (LEKL…AIDA). Positions 1287–1291 (RKRRR) match the Nuclear localization signal motif.

This sequence belongs to the disease resistance TIR-NB-LRR family.

Its subcellular location is the nucleus. It localises to the cytoplasm. The catalysed reaction is NAD(+) + H2O = ADP-D-ribose + nicotinamide + H(+). It carries out the reaction NADP(+) + H2O = ADP-D-ribose 2'-phosphate + nicotinamide + H(+). In terms of biological role, disease resistance (R) protein that confers resistance to multiple powdery and downy mildew by promoting cell death. Acts as a NAD(+) hydrolase (NADase): in response to activation, catalyzes cleavage of NAD(+) into ADP-D-ribose (ADPR) and nicotinamide; NAD(+) cleavage triggering a defense system that promotes cell death. Also able to hydrolyze NADP(+), but not other NAD(+)-related molecules. The chain is Disease resistance protein RUN1 from Vitis rotundifolia (Muscadine grape).